Reading from the N-terminus, the 169-residue chain is Podoplanin (169 aa).

Residues 1-22 (MWRVPVLLLVLGGAGLRVPAAG) form the signal peptide. Residues 23–138 (ASTVRPDDII…EKDGLATVTL (116 aa)) are Extracellular-facing. Thr25 carries O-linked (GalNAc...) threonine glycosylation. Residues 37–69 (DSVVTPGTEDSVVTPGAEDNVVTDGATEEPYES) are disordered. Ser38 is a glycosylation site (O-linked (GalNAc...) serine). Thr41 and Thr44 each carry an O-linked (GalNAc...) threonine glycan. Residue Ser47 is glycosylated (O-linked (GalNAc...) serine). 15 O-linked (GalNAc...) threonine glycosylation sites follow: Thr50, Thr59, Thr63, Thr72, Thr76, Thr79, Thr83, Thr92, Thr96, Thr106, Thr107, Thr108, Thr113, Thr126, and Thr127. The helical transmembrane segment at 139–159 (VGIIVGVLLAIGFIGGIIIVV) threads the bilayer. Residues 140 to 144 (GIIVG) are requires for dimerization and lipid rafts association. The Cytoplasmic portion of the chain corresponds to 160 to 169 (ARKMSGRYSP). The requires for interaction with MSN and EZR stretch occupies residues 161 to 162 (RK).

This sequence belongs to the podoplanin family. Homodimer. Interacts with CLEC1B; the interaction is independent of CLEC1B glycosylation and activates CLEC1B; the interaction is dependent of sialic acid on O-glycans. Interacts with CD9; this interaction is homophilic and attenuates platelet aggregation and pulmonary metastasis induced by PDPN. Interacts with LGALS8; the interaction is glycosylation-dependent; may participate in connection of the lymphatic endothelium to the surrounding extracellular matrix. Interacts with HSPA9. Interacts (via extracellular domain) with CD44; this interaction is required for PDPN-mediated directional migration and regulation of lamellipodia extension/stabilization during cell spreading and migration. Interacts (via cytoplasmic domain) with MSN and EZR; activates RHOA and promotes epithelial-mesenchymal transition. Interacts with CCL21; relocalized PDPN to the basolateral membrane. Extensively O-glycosylated. Contains sialic acid residues. O-glycosylation is necessary for platelet aggregation activity. Disialylated at Thr-59; sialic acid is critical for platelet-aggregating activity and for CLEC1B interaction. Post-translationally, the N-terminus is blocked.

The protein resides in the membrane. It localises to the cell projection. It is found in the filopodium membrane. The protein localises to the lamellipodium membrane. Its subcellular location is the microvillus membrane. The protein resides in the ruffle membrane. It localises to the membrane raft. It is found in the apical cell membrane. The protein localises to the basolateral cell membrane. Its subcellular location is the invadopodium. In terms of biological role, mediates effects on cell migration and adhesion through its different partners. During development plays a role in blood and lymphatic vessels separation by binding CLEC1B, triggering CLEC1B activation in platelets and leading to platelet activation and/or aggregation. Interaction with CD9, on the contrary, attenuates platelet aggregation and pulmonary metastasis induced by PDPN. Mediates effects on cell migration and adhesion through its different partners. Through MSN or EZR interaction promotes epithelial-mesenchymal transition (EMT) leading to ERZ phosphorylation and triggering RHOA activation leading to cell migration increase and invasiveness. Interaction with CD44 promotes directional cell migration in epithelial and tumor cells. In lymph nodes (LNs), controls fibroblastic reticular cells (FRCs) adhesion to the extracellular matrix (ECM) and contraction of the actomyosin by maintaining ERM proteins (EZR; MSN and RDX) and MYL9 activation through association with unknown transmembrane proteins. Engagement of CLEC1B by PDPN promotes FRCs relaxation by blocking lateral membrane interactions leading to reduction of ERM proteins (EZR; MSN and RDX) and MYL9 activation. Through binding with LGALS8 may participate in connection of the lymphatic endothelium to the surrounding extracellular matrix. In keratinocytes, induces changes in cell morphology showing an elongated shape, numerous membrane protrusions, major reorganization of the actin cytoskeleton, increased motility and decreased cell adhesion. Controls invadopodia stability and maturation leading to efficient degradation of the extracellular matrix (ECM) in tumor cells through modulation of RHOC activity in order to activate ROCK1/ROCK2 and LIMK1/LIMK2 and inactivation of CFL1. Required for normal lung cell proliferation and alveolus formation at birth. Does not function as a water channel or as a regulator of aquaporin-type water channels. Does not have any effect on folic acid or amino acid transport. This is Podoplanin (PDPN) from Canis lupus familiaris (Dog).